The chain runs to 140 residues: Required for drug-induced death protein 1 (140 aa).

The disordered stretch occupies residues 1–95; it reads MTVGARLRSK…DKPKKRYRRK (95 aa). Residues 29-53 are compositionally biased toward acidic residues; the sequence is EETDAIVEHLEGEDEDPESQDCERE. The helical transmembrane segment at 118–140 threads the bilayer; sequence LQGFAAAYSAPFGVATSVVSFVR.

Its subcellular location is the membrane. In terms of biological role, regulates drug efflux through modulation of ABCB1 localization and activity. This Rattus norvegicus (Rat) protein is Required for drug-induced death protein 1.